The following is a 475-amino-acid chain: Pyruvate kinase (475 aa).

Arginine 33 contributes to the substrate binding site. Residues asparagine 35, serine 37, and aspartate 67 each coordinate K(+). 35–38 (NFSH) provides a ligand contact to ATP. 2 residues coordinate ATP: arginine 74 and lysine 155. Residue glutamate 220 participates in Mg(2+) binding. Glycine 243, aspartate 244, and threonine 276 together coordinate substrate. Residue aspartate 244 participates in Mg(2+) binding.

This sequence belongs to the pyruvate kinase family. Homotetramer. Mg(2+) serves as cofactor. Requires K(+) as cofactor.

The enzyme catalyses pyruvate + ATP = phosphoenolpyruvate + ADP + H(+). It participates in carbohydrate degradation; glycolysis; pyruvate from D-glyceraldehyde 3-phosphate: step 5/5. This chain is Pyruvate kinase (pyk), found in Corynebacterium glutamicum (strain ATCC 13032 / DSM 20300 / JCM 1318 / BCRC 11384 / CCUG 27702 / LMG 3730 / NBRC 12168 / NCIMB 10025 / NRRL B-2784 / 534).